A 284-amino-acid polypeptide reads, in one-letter code: Bifunctional protein FolD (284 aa).

NADP(+) contacts are provided by residues 165 to 167, serine 190, and isoleucine 231; that span reads GAS.

Belongs to the tetrahydrofolate dehydrogenase/cyclohydrolase family. As to quaternary structure, homodimer.

It catalyses the reaction (6R)-5,10-methylene-5,6,7,8-tetrahydrofolate + NADP(+) = (6R)-5,10-methenyltetrahydrofolate + NADPH. It carries out the reaction (6R)-5,10-methenyltetrahydrofolate + H2O = (6R)-10-formyltetrahydrofolate + H(+). It functions in the pathway one-carbon metabolism; tetrahydrofolate interconversion. Its function is as follows. Catalyzes the oxidation of 5,10-methylenetetrahydrofolate to 5,10-methenyltetrahydrofolate and then the hydrolysis of 5,10-methenyltetrahydrofolate to 10-formyltetrahydrofolate. In Polynucleobacter necessarius subsp. necessarius (strain STIR1), this protein is Bifunctional protein FolD.